The primary structure comprises 143 residues: MKKILTLAAIVLAIGGCSGQQAETQATPVNIKSLAGDSAVTDIRPADAMPVYPARGKALERSFTDQPPLIPHKDDYKITLDKNGCLTCHSWDKAARMKATPVAKSHVIDDKGTLNGHNYFCTQCHVAQAENKAPLVENKFSTQ.

The signal sequence occupies residues 1–22 (MKKILTLAAIVLAIGGCSGQQA). Heme c is bound by residues H72, C85, C88, H89, H106, C121, C124, and H125.

Belongs to the NapB family. Component of the periplasmic nitrate reductase NapAB complex composed of NapA and NapB. Binds 2 heme C groups per subunit.

It is found in the periplasm. Functionally, electron transfer subunit of the periplasmic nitrate reductase complex NapAB. Receives electrons from the membrane-anchored tetraheme c-type CymA protein and transfers these to NapA subunit, thus allowing electron flow between membrane and periplasm. Not essential for nitrate reduction but confers advantage to the organism when grown on nitrate and thereby a fitness gain in utilizing nitrate. This chain is Periplasmic nitrate reductase, electron transfer subunit, found in Shewanella oneidensis (strain ATCC 700550 / JCM 31522 / CIP 106686 / LMG 19005 / NCIMB 14063 / MR-1).